The primary structure comprises 461 residues: UDP-N-acetylmuramoylalanine--D-glutamate ligase (461 aa).

117–123 (GTNGKTT) serves as a coordination point for ATP.

The protein belongs to the MurCDEF family.

It is found in the cytoplasm. It catalyses the reaction UDP-N-acetyl-alpha-D-muramoyl-L-alanine + D-glutamate + ATP = UDP-N-acetyl-alpha-D-muramoyl-L-alanyl-D-glutamate + ADP + phosphate + H(+). It functions in the pathway cell wall biogenesis; peptidoglycan biosynthesis. Its function is as follows. Cell wall formation. Catalyzes the addition of glutamate to the nucleotide precursor UDP-N-acetylmuramoyl-L-alanine (UMA). The sequence is that of UDP-N-acetylmuramoylalanine--D-glutamate ligase from Synechococcus sp. (strain CC9605).